Reading from the N-terminus, the 239-residue chain is Small ribosomal subunit protein uS2 (239 aa).

The protein belongs to the universal ribosomal protein uS2 family.

The polypeptide is Small ribosomal subunit protein uS2 (Prochlorococcus marinus (strain MIT 9313)).